Here is a 315-residue protein sequence, read N- to C-terminus: DNA-directed RNA polymerase subunit alpha (315 aa).

The alpha N-terminal domain (alpha-NTD) stretch occupies residues 1–228 (MLEIEKPKIE…EHLRLFVGLT (228 aa)). Residues 245 to 315 (KNKLLEMPIE…LGLDLRHDEE (71 aa)) form an alpha C-terminal domain (alpha-CTD) region.

This sequence belongs to the RNA polymerase alpha chain family. As to quaternary structure, homodimer. The RNAP catalytic core consists of 2 alpha, 1 beta, 1 beta' and 1 omega subunit. When a sigma factor is associated with the core the holoenzyme is formed, which can initiate transcription.

It catalyses the reaction RNA(n) + a ribonucleoside 5'-triphosphate = RNA(n+1) + diphosphate. DNA-dependent RNA polymerase catalyzes the transcription of DNA into RNA using the four ribonucleoside triphosphates as substrates. The protein is DNA-directed RNA polymerase subunit alpha of Desulforudis audaxviator (strain MP104C).